Here is a 185-residue protein sequence, read N- to C-terminus: Ribosome-recycling factor (185 aa).

Belongs to the RRF family.

Its subcellular location is the cytoplasm. In terms of biological role, responsible for the release of ribosomes from messenger RNA at the termination of protein biosynthesis. May increase the efficiency of translation by recycling ribosomes from one round of translation to another. This Bacillus cereus (strain B4264) protein is Ribosome-recycling factor.